The chain runs to 492 residues: Bifunctional purine biosynthesis protein PurH (492 aa).

One can recognise an MGS-like domain in the interval 1–144 (MKKVILSVSD…KNFKHVTTIV (144 aa)).

This sequence belongs to the PurH family.

The catalysed reaction is (6R)-10-formyltetrahydrofolate + 5-amino-1-(5-phospho-beta-D-ribosyl)imidazole-4-carboxamide = 5-formamido-1-(5-phospho-D-ribosyl)imidazole-4-carboxamide + (6S)-5,6,7,8-tetrahydrofolate. It catalyses the reaction IMP + H2O = 5-formamido-1-(5-phospho-D-ribosyl)imidazole-4-carboxamide. It participates in purine metabolism; IMP biosynthesis via de novo pathway; 5-formamido-1-(5-phospho-D-ribosyl)imidazole-4-carboxamide from 5-amino-1-(5-phospho-D-ribosyl)imidazole-4-carboxamide (10-formyl THF route): step 1/1. Its pathway is purine metabolism; IMP biosynthesis via de novo pathway; IMP from 5-formamido-1-(5-phospho-D-ribosyl)imidazole-4-carboxamide: step 1/1. The protein is Bifunctional purine biosynthesis protein PurH of Staphylococcus carnosus (strain TM300).